Consider the following 303-residue polypeptide: Probable 5-dehydro-4-deoxyglucarate dehydratase (303 aa).

It belongs to the DapA family.

It catalyses the reaction 5-dehydro-4-deoxy-D-glucarate + H(+) = 2,5-dioxopentanoate + CO2 + H2O. Its pathway is carbohydrate acid metabolism; D-glucarate degradation; 2,5-dioxopentanoate from D-glucarate: step 2/2. This Pseudomonas syringae pv. syringae (strain B728a) protein is Probable 5-dehydro-4-deoxyglucarate dehydratase.